We begin with the raw amino-acid sequence, 248 residues long: 14-3-3-like protein 1 (248 aa).

It belongs to the 14-3-3 family. As to quaternary structure, interacts with daf-16 and sir-2.1. Interacts with atgl-1. Interacts with hcf-1.

It localises to the cytoplasm. Its subcellular location is the nucleus. Functionally, required to modulate lifespan, in concert with hcf-1, acting redundantly with 14-3-3-like protein ftt-2. The sequence is that of 14-3-3-like protein 1 (par-5) from Caenorhabditis elegans.